The sequence spans 431 residues: O-methyltransferase xanE (431 aa).

Aspartate 283 contributes to the S-adenosyl-L-methionine binding site. Histidine 330 serves as the catalytic Proton acceptor.

It belongs to the class I-like SAM-binding methyltransferase superfamily. Cation-independent O-methyltransferase family.

Its pathway is secondary metabolite biosynthesis. Its function is as follows. O-methyltransferase; part of the gene cluster that mediates the biosynthesis of the isocyanide xanthocillin and its derivatives. The first step of the pathway consists in the conversion of tyrosine into a vinyl-isonitrile intermediate by the isocyanide synthase xanB. Subsequent oxidative dimerization of this intermediate to form xanthocillin may involve the cytochrome P450 monooxygenase xanG, whose expression is coregulated with that of XanB. Xanthocillin can be further modified by the isonitrile hydratase-like protein xanA which introduces N-formyl groups and the methyltransferase xanE which introduces methyl groups, leading to the production of several derivatives including fumiformamide. Finally, fumiformamide can be subject to both oxidative and reductive cyclization to yield melanocins E and F, respectively. The protein is O-methyltransferase xanE of Aspergillus fumigatus (strain ATCC MYA-4609 / CBS 101355 / FGSC A1100 / Af293) (Neosartorya fumigata).